The sequence spans 164 residues: C-type natriuretic peptide (164 aa).

The signal sequence occupies residues 1–23 (MVASRLAAGGLLLLALLALALDG). Disordered stretches follow at residues 24–93 (KPAP…AAAA) and 115–134 (HPEH…GASR). Residues 24 to 142 (KPAPPQPLRK…SRRLKGVAKK (119 aa)) constitute a propeptide that is removed on maturation. Positions 58 to 67 (AGGGGGGGRS) are enriched in gly residues. The span at 68-93 (GSKAANAAPTAPKSKGGAAAAAAAAA) shows a compositional bias: low complexity. Gly residues predominate over residues 121 to 132 (GGGGGGGGGGGA). A disulfide bond links C148 and C164.

It belongs to the natriuretic peptide family. As to expression, expressed by the venom gland.

Its subcellular location is the secreted. Functionally, snake venom natriuretic peptide that has a vasorelaxant activity in rat aortic strips and a diuretic potency in anesthetized rats. May act by activating natriuretic receptors (NPR1 and/or NPR2). The polypeptide is C-type natriuretic peptide (Philodryas olfersii (Green snake)).